Reading from the N-terminus, the 417-residue chain is NADH-quinone oxidoreductase subunit D 2 (417 aa).

This sequence belongs to the complex I 49 kDa subunit family. As to quaternary structure, NDH-1 is composed of 14 different subunits. Subunits NuoB, C, D, E, F, and G constitute the peripheral sector of the complex.

The protein resides in the cell membrane. It catalyses the reaction a quinone + NADH + 5 H(+)(in) = a quinol + NAD(+) + 4 H(+)(out). Its function is as follows. NDH-1 shuttles electrons from NADH, via FMN and iron-sulfur (Fe-S) centers, to quinones in the respiratory chain. The immediate electron acceptor for the enzyme in this species is believed to be ubiquinone. Couples the redox reaction to proton translocation (for every two electrons transferred, four hydrogen ions are translocated across the cytoplasmic membrane), and thus conserves the redox energy in a proton gradient. In Roseiflexus sp. (strain RS-1), this protein is NADH-quinone oxidoreductase subunit D 2.